The primary structure comprises 77 residues: DNA-directed RNA polymerase subunit Rpo5 (77 aa).

It belongs to the archaeal Rpo5/eukaryotic RPB5 RNA polymerase subunit family. In terms of assembly, part of the RNA polymerase complex.

Its subcellular location is the cytoplasm. It catalyses the reaction RNA(n) + a ribonucleoside 5'-triphosphate = RNA(n+1) + diphosphate. Functionally, DNA-dependent RNA polymerase (RNAP) catalyzes the transcription of DNA into RNA using the four ribonucleoside triphosphates as substrates. The protein is DNA-directed RNA polymerase subunit Rpo5 of Methanothermobacter thermautotrophicus (strain ATCC 29096 / DSM 1053 / JCM 10044 / NBRC 100330 / Delta H) (Methanobacterium thermoautotrophicum).